The sequence spans 103 residues: Protein S100-A16 (103 aa).

The EF-hand 1; degenerate domain maps to 12 to 47 (VVVLVENFYKYVSKHSLVKNKISKSSFRKMLQKELN). In terms of domain architecture, EF-hand 2 spans 54 to 89 (GNRKAADKLIQNLDANHDGRISFDEYWTLIGGITSP). Ca(2+)-binding residues include aspartate 67, asparagine 69, aspartate 71, arginine 73, and glutamate 78.

It belongs to the S-100 family. In terms of assembly, homodimer. Interacts with TP53.

The protein localises to the nucleus. It is found in the nucleolus. The protein resides in the cytoplasm. In terms of biological role, calcium-binding protein. Binds one calcium ion per monomer. Can promote differentiation of adipocytes (in vitro). Overexpression in preadipocytes increases their proliferation, enhances adipogenesis and reduces insulin-stimulated glucose uptake. The sequence is that of Protein S100-A16 (S100A16) from Bos taurus (Bovine).